A 75-amino-acid chain; its full sequence is U14-hexatoxin-Mg1a (75 aa).

The first 19 residues, 1-19 (MKLTLFILIVFVVLANVYA), serve as a signal peptide directing secretion. A propeptide spanning residues 20-31 (AGISERNIIGGR) is cleaved from the precursor.

Contains 4 disulfide bonds. Expressed by the venom gland.

Its subcellular location is the secreted. In terms of biological role, no toxicity is observed upon intracranial injection into mice and intrathorax injection into crickets. The sequence is that of U14-hexatoxin-Mg1a from Macrothele gigas (Japanese funnel web spider).